Consider the following 230-residue polypeptide: uncharacterized protein (230 aa).

A signal peptide spans 1-21 (MARYDARLRGIGKAHACSAFA). The segment at 47–190 (SASVQENFIA…TVQTSSSGDP (144 aa)) is disordered. Residues 141 to 150 (PQSQTSANSQ) show a composition bias toward polar residues. Residues 151–165 (KKPEIRCRERSKNAR) show a composition bias toward basic and acidic residues. A compositionally biased stretch (polar residues) spans 173–188 (AVATNEAETVQTSSSG).

It to R.meliloti RA0936 and y4aO.

This is an uncharacterized protein from Sinorhizobium fredii (strain NBRC 101917 / NGR234).